A 259-amino-acid chain; its full sequence is Proteasome subunit beta type-4 (259 aa).

This sequence belongs to the peptidase T1B family. In terms of assembly, the 26S proteasome consists of a 20S proteasome core and two 19S regulatory subunits. The 20S proteasome core is composed of 28 subunits that are arranged in four stacked rings, resulting in a barrel-shaped structure. The two end rings are each formed by seven alpha subunits, and the two central rings are each formed by seven beta subunits. The catalytic chamber with the active sites is on the inside of the barrel.

It is found in the cytoplasm. The protein localises to the nucleus. Its function is as follows. Non-catalytic component of the proteasome, a multicatalytic proteinase complex which is characterized by its ability to cleave peptides with Arg, Phe, Tyr, Leu, and Glu adjacent to the leaving group at neutral or slightly basic pH. The proteasome has an ATP-dependent proteolytic activity. The protein is Proteasome subunit beta type-4 (psmB4-1) of Dictyostelium discoideum (Social amoeba).